Reading from the N-terminus, the 404-residue chain is Interferon-activable protein 205-A (404 aa).

Residues 1–88 form the Pyrin domain; sequence MENEYKRLVL…AEILKKERSE (88 aa). The tract at residues 85–198 is disordered; sequence ERSEVTEETS…KSQPQNQNIP (114 aa). Composition is skewed to low complexity over residues 102-112 and 122-132; these read ASPATPTSTTS and TSTTQEETSTA. Residues 137–147 are compositionally biased toward basic and acidic residues; that stretch reads GMSEEKTDVKK. Residues 168 to 185 show a composition bias toward low complexity; sequence QSPISQVSSSASSNIPSA. A compositionally biased stretch (polar residues) spans 186-197; sequence KNQKSQPQNQNI. An HIN-200 domain is found at 192–392; it reads PQNQNIPRGA…CGDHSFVKVT (201 aa).

This sequence belongs to the HIN-200 family.

The protein resides in the nucleus. Its function is as follows. May act as a transcriptional regulator in the myeloid lineage. Inhibits cell growth via p53/TP53 and RB1-dependent and independent pathways. This chain is Interferon-activable protein 205-A (Ifi205a), found in Mus musculus (Mouse).